A 289-amino-acid chain; its full sequence is Heme oxygenase 1 (289 aa).

Topologically, residues 1–266 (MERPQLDSMS…SQISTSSSQT (266 aa)) are cytoplasmic. 4 residues coordinate heme b: lysine 18, histidine 25, tyrosine 134, and arginine 183. The segment at 225 to 261 (HKDQSPSQTEFLRQRPASLVQDTTSAETPRGKSQIST) is disordered. Phosphoserine is present on residues serine 229 and serine 242. Positions 244-261 (VQDTTSAETPRGKSQIST) are enriched in polar residues. The helical; Anchor for type IV membrane protein transmembrane segment at 267–289 (PLLRWVLTLSFLLATVAVGIYAM) threads the bilayer.

It belongs to the heme oxygenase family. As to quaternary structure, homodimer and higher order homooligomer. Oligomerization is crucial for its stability and function in the endoplasmic reticulum. Interacts with FLVCR2; this interaction is potentiated in the presence of heme. Post-translationally, a soluble form arises by proteolytic removal of the membrane anchor.

It localises to the endoplasmic reticulum membrane. The catalysed reaction is heme b + 3 reduced [NADPH--hemoprotein reductase] + 3 O2 = biliverdin IXalpha + CO + Fe(2+) + 3 oxidized [NADPH--hemoprotein reductase] + 3 H2O + H(+). Inhibited by metalloporphyrins such as Sn- and Zn-protoporphyrins. In terms of biological role, catalyzes the oxidative cleavage of heme at the alpha-methene bridge carbon, released as carbon monoxide (CO), to generate biliverdin IXalpha, while releasing the central heme iron chelate as ferrous iron. Affords protection against programmed cell death and this cytoprotective effect relies on its ability to catabolize free heme and prevent it from sensitizing cells to undergo apoptosis. Its function is as follows. Catalyzes the oxidative cleavage of heme at the alpha-methene bridge carbon, released as carbon monoxide (CO), to generate biliverdin IXalpha, while releasing the central heme iron chelate as ferrous iron. The polypeptide is Heme oxygenase 1 (Hmox1) (Rattus norvegicus (Rat)).